Here is a 609-residue protein sequence, read N- to C-terminus: NADH-ubiquinone oxidoreductase chain 5 (609 aa).

Helical transmembrane passes span 6–26 (SSILMILILLTTPIIISMTNL), 35–55 (YATSSIKFSFLLSLLPLLLFF), 84–104 (YFSILFLSVALFVTWSIMQFS), 116–138 (RFIKYLMMFLITMLILTSANNLF), 140–160 (LFIGWEGVGIMSFLLIGWWYG), 171–191 (AILYNRVGDIGFILAMTWFCL), 240–260 (TPVSALLHSSTMVVAGIFLMI), 272–292 (IMTAMLCLGAITTLFTAICAL), 300–319 (IVAFSTSSQLGLMMVTLGIN), 330–350 (THAFFKAMLFMCSGSIIHSLN), 365–385 (MPFTSSCLIIGSLALTGMPFL), 409–429 (MITLIATSMTAVYSMRIIYFV), 456–476 (LALGSILAGFLISLNIPPTNI), 481–501 (MPWHLKMTALLITILGFAIAL), and 581–601 (GLIKLYFLSFLITISLIFILH).

It belongs to the complex I subunit 5 family. In terms of assembly, core subunit of respiratory chain NADH dehydrogenase (Complex I) which is composed of 45 different subunits.

It localises to the mitochondrion inner membrane. It carries out the reaction a ubiquinone + NADH + 5 H(+)(in) = a ubiquinol + NAD(+) + 4 H(+)(out). Functionally, core subunit of the mitochondrial membrane respiratory chain NADH dehydrogenase (Complex I) which catalyzes electron transfer from NADH through the respiratory chain, using ubiquinone as an electron acceptor. Essential for the catalytic activity and assembly of complex I. The polypeptide is NADH-ubiquinone oxidoreductase chain 5 (Rattus norvegicus (Rat)).